The following is a 463-amino-acid chain: Cysteine--tRNA ligase (463 aa).

C29 is a Zn(2+) binding site. A 'HIGH' region motif is present at residues P31–N41. Positions 227, 252, and 256 each coordinate Zn(2+). The 'KMSKS' region motif lies at K285–S289. K288 is an ATP binding site.

The protein belongs to the class-I aminoacyl-tRNA synthetase family. In terms of assembly, monomer. Zn(2+) serves as cofactor.

Its subcellular location is the cytoplasm. The catalysed reaction is tRNA(Cys) + L-cysteine + ATP = L-cysteinyl-tRNA(Cys) + AMP + diphosphate. The sequence is that of Cysteine--tRNA ligase from Rhodopseudomonas palustris (strain BisB5).